The sequence spans 416 residues: MIDYSQFPRKNILCVDMKSFYASVSAVTMGLNPLTCYLAVVGNTDRQGSVVLAASPALKKDFGIKTGSRLFEIPEDPRIHIVNPQMKLFIRVSTEITKLFYRFVPEKCVHTYSIDESFLDAGKEDPEEMAKAIQSSMWREFGLMCTVGIGDNMLLSKLALDLESKKTKSGIARWRYEDVPNKLWKVRPLSKMWGIGGRMERNLNRMGISTIGQLAKFPLELLEKKFGIMGNQLYYHAHGIDLSEIGAPLMQGQISFGKSQILLRDYTRSEEIKAVLLEICEEVARRARTHNKVGRTISLGIGYSKDELGGGFHRSKTIDLPTSITMDIYRCCLMLFNKFYSGKTVRSVSVTLSNIEDDVNQQLSLFEVDNEKRRKLGFVMDGIRSKYGSKAILRAVSYTPAGTALQRAGLTGGHKS.

Residues 12–196 (ILCVDMKSFY…RPLSKMWGIG (185 aa)) form the UmuC domain. Positions 16 and 115 each coordinate Mg(2+). Glu116 is a catalytic residue.

Belongs to the DNA polymerase type-Y family. It depends on Mg(2+) as a cofactor.

In Bacillus subtilis (strain 168), this protein is Putative UV-damage repair protein UvrX (uvrX).